An 82-amino-acid polypeptide reads, in one-letter code: ATP synthase subunit c, chloroplastic (82 aa).

2 consecutive transmembrane segments (helical) span residues Pro3 to Gly23 and Phe57 to Ala77.

Belongs to the ATPase C chain family. In terms of assembly, F-type ATPases have 2 components, F(1) - the catalytic core - and F(0) - the membrane proton channel. F(1) has five subunits: alpha(3), beta(3), gamma(1), delta(1), epsilon(1). F(0) has four main subunits: a(1), b(1), b'(1) and c(10-14). The alpha and beta chains form an alternating ring which encloses part of the gamma chain. F(1) is attached to F(0) by a central stalk formed by the gamma and epsilon chains, while a peripheral stalk is formed by the delta, b and b' chains.

The protein resides in the plastid. Its subcellular location is the chloroplast thylakoid membrane. Functionally, f(1)F(0) ATP synthase produces ATP from ADP in the presence of a proton or sodium gradient. F-type ATPases consist of two structural domains, F(1) containing the extramembraneous catalytic core and F(0) containing the membrane proton channel, linked together by a central stalk and a peripheral stalk. During catalysis, ATP synthesis in the catalytic domain of F(1) is coupled via a rotary mechanism of the central stalk subunits to proton translocation. In terms of biological role, key component of the F(0) channel; it plays a direct role in translocation across the membrane. A homomeric c-ring of between 10-14 subunits forms the central stalk rotor element with the F(1) delta and epsilon subunits. This Oltmannsiellopsis viridis (Marine flagellate) protein is ATP synthase subunit c, chloroplastic.